A 124-amino-acid chain; its full sequence is Small ribosomal subunit protein uS12 (124 aa).

Asp89 is subject to 3-methylthioaspartic acid.

The protein belongs to the universal ribosomal protein uS12 family. As to quaternary structure, part of the 30S ribosomal subunit. Contacts proteins S8 and S17. May interact with IF1 in the 30S initiation complex.

In terms of biological role, with S4 and S5 plays an important role in translational accuracy. Interacts with and stabilizes bases of the 16S rRNA that are involved in tRNA selection in the A site and with the mRNA backbone. Located at the interface of the 30S and 50S subunits, it traverses the body of the 30S subunit contacting proteins on the other side and probably holding the rRNA structure together. The combined cluster of proteins S8, S12 and S17 appears to hold together the shoulder and platform of the 30S subunit. This chain is Small ribosomal subunit protein uS12, found in Histophilus somni (strain 129Pt) (Haemophilus somnus).